A 351-amino-acid chain; its full sequence is Nuclear inhibitor of protein phosphatase 1 (351 aa).

The interaction with CDC5L, SF3B1 and MELK stretch occupies residues 1 to 142 (MAAAVNSGSS…LPSAVKGDEK (142 aa)). An FHA domain is found at 49 to 101 (YLFGRNPDLCDFTIDHQSCSRVHAALVYHKHLKRVFLIDLNSTHGTFLGHIRL). The interval 143-224 (MGGEDDELKG…VDPSVGRFRN (82 aa)) is interaction with EED. Threonine 161 carries the phosphothreonine modification. Phosphoserine occurs at positions 178 and 199. 2 consecutive short sequence motifs (nuclear localization signal) follow at residues 185–209 (GNLD…DDEI) and 210–240 (INPE…RMEG). Residues 191–200 (RPKRKRKNSR) form an involved in PP-1 inhibition region. The segment at 200–203 (RVTF) is involved in PP-1 binding. Serine 204 is subject to Phosphoserine. Serine 249 carries the post-translational modification Phosphoserine. The residue at position 264 (tyrosine 264) is a Phosphotyrosine. Residues 310–329 (AVAINPTPNPAVYNPEAVNE) form an interaction with EED region. The interval 314–351 (NPTPNPAVYNPEAVNEPKKKKYAKEAWPGKKPTPSLLI) is disordered. The interval 330–351 (PKKKKYAKEAWPGKKPTPSLLI) is RNA-binding. The interval 331–337 (KKKKYAK) is involved in PP-1 inhibition. Residue tyrosine 335 is modified to Phosphotyrosine.

In terms of assembly, interacts with phosphorylated CDC5L, SF3B1 and MELK. Part of the spliceosome. Interacts with PPP1CA, PPP1CB and PPP1CC. Interacts with EED. Part of a complex consisting of PPP1R8, EED, HDAC2 and PP-1. In terms of processing, may be inactivated by phosphorylation on Ser-199 or Ser-204.

The protein localises to the nucleus. It is found in the nucleus speckle. Inhibitor subunit of the major nuclear protein phosphatase-1 (PP-1). It has RNA-binding activity but does not cleave RNA and may target PP-1 to RNA-associated substrates. May also be involved in pre-mRNA splicing. Binds DNA and might act as a transcriptional repressor. Essential for cell proliferation and early embryonic development. In Mus musculus (Mouse), this protein is Nuclear inhibitor of protein phosphatase 1 (Ppp1r8).